A 379-amino-acid chain; its full sequence is Lipid-A-disaccharide synthase (379 aa).

Belongs to the LpxB family.

The catalysed reaction is a lipid X + a UDP-2-N,3-O-bis[(3R)-3-hydroxyacyl]-alpha-D-glucosamine = a lipid A disaccharide + UDP + H(+). The protein operates within bacterial outer membrane biogenesis; LPS lipid A biosynthesis. Functionally, condensation of UDP-2,3-diacylglucosamine and 2,3-diacylglucosamine-1-phosphate to form lipid A disaccharide, a precursor of lipid A, a phosphorylated glycolipid that anchors the lipopolysaccharide to the outer membrane of the cell. The chain is Lipid-A-disaccharide synthase from Vibrio cholerae serotype O1 (strain ATCC 39541 / Classical Ogawa 395 / O395).